The following is a 291-amino-acid chain: Serine hydrolase BPHL (291 aa).

An N-terminal signal peptide occupies residues 1-37 (MATATVRPAAQRLRLLLSPLKSRICVPQAEPVATFGT). One can recognise an AB hydrolase-1 domain in the interval 62–173 (AILLLPGMLG…ANAYVTEEDS (112 aa)). An N6-acetyllysine; alternate modification is found at Lys74. Lys74 carries the post-translational modification N6-succinyllysine; alternate. N6-acetyllysine occurs at positions 86 and 119. Lys126 is modified (N6-acetyllysine; alternate). Position 126 is an N6-succinyllysine; alternate (Lys126). The active-site Nucleophile is Ser139. Lys184 is subject to N6-succinyllysine. Lys191 carries the post-translational modification N6-acetyllysine; alternate. Position 191 is an N6-succinyllysine; alternate (Lys191). The residue at position 217 (Lys217) is an N6-acetyllysine. Glu221 is a binding site for Mg(2+). An N6-acetyllysine modification is found at Lys243. Asp244 acts as the Charge relay system in catalysis. An N6-acetyllysine; alternate mark is found at Lys260 and Lys271. Residues Lys260 and Lys271 each carry the N6-succinyllysine; alternate modification. The active-site Charge relay system is His272.

This sequence belongs to the AB hydrolase superfamily. Lipase family. As to quaternary structure, monomer. May also form homodimers.

It is found in the mitochondrion. The catalysed reaction is L-homocysteine thiolactone + H2O = L-homocysteine + H(+). It carries out the reaction valacyclovir + H2O = acyclovir + L-valine + H(+). Specific alpha-amino acid ester serine hydrolase that prefers small, hydrophobic, and aromatic side chains and does not have a stringent requirement for the leaving group other than preferring a primary alcohol. Has homocysteine-thiolactonase activity (in vitro) and may play a significant role in the detoxification of homocysteine thiolactone in vivo. Catalyzes the hydrolytic activation of amino acid ester prodrugs of nucleoside analogs such as valacyclovir and valganciclovir, converting them into their active forms (acyclovir and ganciclovir). This is Serine hydrolase BPHL (Bphl) from Mus musculus (Mouse).